Here is a 342-residue protein sequence, read N- to C-terminus: Phosphoribosylformylglycinamidine cyclo-ligase (342 aa).

It belongs to the AIR synthase family.

Its subcellular location is the cytoplasm. It catalyses the reaction 2-formamido-N(1)-(5-O-phospho-beta-D-ribosyl)acetamidine + ATP = 5-amino-1-(5-phospho-beta-D-ribosyl)imidazole + ADP + phosphate + H(+). It functions in the pathway purine metabolism; IMP biosynthesis via de novo pathway; 5-amino-1-(5-phospho-D-ribosyl)imidazole from N(2)-formyl-N(1)-(5-phospho-D-ribosyl)glycinamide: step 2/2. This is Phosphoribosylformylglycinamidine cyclo-ligase from Staphylococcus saprophyticus subsp. saprophyticus (strain ATCC 15305 / DSM 20229 / NCIMB 8711 / NCTC 7292 / S-41).